The primary structure comprises 931 residues: Neuropilin-2 (931 aa).

Positions 1–20 (MDMFPLTWVFLALYFSRHQV) form a signal peptide, or 22. The Extracellular segment spans residues 21 to 864 (RGQPDPPCGG…EKSWLYTLDP (844 aa)). 3 cysteine pairs are disulfide-bonded: Cys-28-Cys-55, Cys-83-Cys-105, and Cys-149-Cys-175. CUB domains are found at residues 28 to 142 (CGGR…YEIF) and 149 to 267 (CSKN…YYLV). 2 N-linked (GlcNAc...) asparagine glycosylation sites follow: Asn-152 and Asn-157. Positions 197, 211, and 252 each coordinate Ca(2+). Residues Cys-208 and Cys-230 are joined by a disulfide bond. Disulfide bonds link Cys-277-Cys-427 and Cys-434-Cys-592. 2 F5/8 type C domains span residues 277 to 427 (CNVP…LFGC) and 434 to 592 (CSNM…VLGC). A compositionally biased stretch (polar residues) spans 298–310 (TYSDGRWTPQQSR). The tract at residues 298–317 (TYSDGRWTPQQSRLHGDDNG) is disordered. Residues 601–622 (VETLGPTVKSEETTTPYPTEEE) form a disordered region. Asn-629 carries N-linked (GlcNAc...) asparagine glycosylation. In terms of domain architecture, MAM spans 642–802 (SGFNCNFDFL…TDVPLENCME (161 aa)). Asn-839 carries an N-linked (GlcNAc...) asparagine glycan. A helical membrane pass occupies residues 865 to 889 (ILITIIAMSSLGVLLGATCAGLLLY). Residues 890-931 (CTCSYSGLSSRSCTTLENYNFELYDGLKHKVKMNHQKCCSEA) lie on the Cytoplasmic side of the membrane.

The protein belongs to the neuropilin family. Heterodimer with NRP1. Binds PLXNB1. In terms of assembly, (Microbial infection) Interacts with human cytomegalovirus proteins gL, UL128, UL130 and UL131A.

The protein localises to the membrane. It is found in the secreted. Functionally, high affinity receptor for semaphorins 3C, 3F, VEGF-165 and VEGF-145 isoforms of VEGF, and the PLGF-2 isoform of PGF. In terms of biological role, (Microbial infection) Acts as a receptor for human cytomegalovirus pentamer-dependent entry in epithelial and endothelial cells. This Homo sapiens (Human) protein is Neuropilin-2 (NRP2).